The sequence spans 294 residues: TBC1 domain family member 7 (294 aa).

The 183-residue stretch at 50 to 232 folds into the Rab-GAP TBC domain; the sequence is PLPSMYRIHV…RVWDKVISGS (183 aa).

Component of the TSC-TBC complex (also named Rhebulator complex), composed of 2 molecules of TSC1, 2 molecules of TSC2 and 1 molecule of TBC1D7.

It localises to the lysosome membrane. The protein localises to the cytoplasmic vesicle. The protein resides in the cytoplasm. It is found in the cytosol. Its function is as follows. Non-catalytic component of the TSC-TBC complex, a multiprotein complex that acts as a negative regulator of the canonical mTORC1 complex, an evolutionarily conserved central nutrient sensor that stimulates anabolic reactions and macromolecule biosynthesis to promote cellular biomass generation and growth. The TSC-TBC complex acts as a GTPase-activating protein (GAP) for the small GTPase RHEB, a direct activator of the protein kinase activity of mTORC1. In absence of nutrients, the TSC-TBC complex inhibits mTORC1, thereby preventing phosphorylation of ribosomal protein S6 kinase (RPS6KB1 and RPS6KB2) and EIF4EBP1 (4E-BP1) by the mTORC1 signaling. The TSC-TBC complex is inactivated in response to nutrients, relieving inhibition of mTORC1. This chain is TBC1 domain family member 7 (tbc1d7), found in Danio rerio (Zebrafish).